The primary structure comprises 192 residues: Large ribosomal subunit protein bL9 (192 aa).

The segment at 172-192 (DALRPEDFFDPEADGIDEDEA) is disordered. The span at 179 to 192 (FFDPEADGIDEDEA) shows a compositional bias: acidic residues.

It belongs to the bacterial ribosomal protein bL9 family.

Its function is as follows. Binds to the 23S rRNA. The protein is Large ribosomal subunit protein bL9 of Rhizobium etli (strain CIAT 652).